The chain runs to 93 residues: Small ribosomal subunit protein bS20c (93 aa).

This sequence belongs to the bacterial ribosomal protein bS20 family.

It is found in the plastid. The protein localises to the chloroplast. Binds directly to 16S ribosomal RNA. The polypeptide is Small ribosomal subunit protein bS20c (Thalassiosira pseudonana (Marine diatom)).